The chain runs to 509 residues: Cobyric acid synthase (509 aa).

The region spanning 262 to 459 is the GATase cobBQ-type domain; that stretch reads EIKVGIIKLP…IHGIFENDNW (198 aa). C343 serves as the catalytic Nucleophile. The active site involves H451.

It belongs to the CobB/CobQ family. CobQ subfamily.

The protein operates within cofactor biosynthesis; adenosylcobalamin biosynthesis. Its function is as follows. Catalyzes amidations at positions B, D, E, and G on adenosylcobyrinic A,C-diamide. NH(2) groups are provided by glutamine, and one molecule of ATP is hydrogenolyzed for each amidation. The sequence is that of Cobyric acid synthase from Prochlorococcus marinus (strain AS9601).